The primary structure comprises 394 residues: 8-amino-7-oxononanoate synthase (394 aa).

Arg-21 contributes to the substrate binding site. 112-113 (GY) serves as a coordination point for pyridoxal 5'-phosphate. His-137 contributes to the substrate binding site. Residues Ser-183, His-211, and Thr-239 each coordinate pyridoxal 5'-phosphate. Residue Lys-242 is modified to N6-(pyridoxal phosphate)lysine. Thr-358 contributes to the substrate binding site.

The protein belongs to the class-II pyridoxal-phosphate-dependent aminotransferase family. BioF subfamily. Homodimer. Requires pyridoxal 5'-phosphate as cofactor.

The catalysed reaction is 6-carboxyhexanoyl-[ACP] + L-alanine + H(+) = (8S)-8-amino-7-oxononanoate + holo-[ACP] + CO2. It participates in cofactor biosynthesis; biotin biosynthesis. In terms of biological role, catalyzes the decarboxylative condensation of pimeloyl-[acyl-carrier protein] and L-alanine to produce 8-amino-7-oxononanoate (AON), [acyl-carrier protein], and carbon dioxide. This is 8-amino-7-oxononanoate synthase from Burkholderia cenocepacia (strain ATCC BAA-245 / DSM 16553 / LMG 16656 / NCTC 13227 / J2315 / CF5610) (Burkholderia cepacia (strain J2315)).